A 706-amino-acid chain; its full sequence is Envelope glycoprotein H (706 aa).

An N-terminal signal peptide occupies residues 1–18; that stretch reads MQLLCVFCLVLLWEVGAA. The Virion surface portion of the chain corresponds to 19–682; that stretch reads SLSEVKLHLD…LYEERAHVVL (664 aa). N60 carries N-linked (GlcNAc...) asparagine; by host glycosylation. Residues 165–229 form an interaction with gL region; it reads DKFQYTGAMT…QSGDYSLVIV (65 aa). A disulfide bridge links C278 with C335. An N-linked (GlcNAc...) asparagine; by host glycan is attached at N435. 2 disulfides stabilise this stretch: C454/C478 and C534/C587. N-linked (GlcNAc...) asparagine; by host glycans are attached at residues N549 and N604. A disulfide bridge links C612 with C615. An N-linked (GlcNAc...) asparagine; by host glycan is attached at N664. A helical membrane pass occupies residues 683-703; sequence AIILYFIAFALGIFLVHKIVM. At 704–706 the chain is on the intravirion side; that stretch reads FFL.

It belongs to the herpesviridae glycoprotein H family. As to quaternary structure, interacts with glycoprotein L (gL); this interaction is necessary for the correct processing and cell surface expression of gH. The heterodimer gH/gL seems to interact with gB trimers during fusion. The heterodimer gH/gL interacts with host EPHA2 to facilitate virus internalization and fusion. Interacts with glycoprotein 42/BZLF2. Post-translationally, N-glycosylated, O-glycosylated, and sialylated.

It is found in the virion membrane. Its subcellular location is the host cell membrane. It localises to the host endosome membrane. In terms of biological role, the heterodimer glycoprotein H-glycoprotein L is required for the fusion of viral and plasma membranes leading to virus entry into the host cell. Following initial binding to host receptor, membrane fusion is mediated by the fusion machinery composed of gB and the heterodimer gH/gL. May also be involved in the fusion between the virion envelope and the outer nuclear membrane during virion morphogenesis. The heterodimer gH/gL targets also host EPHA2 to promote viral entry. The chain is Envelope glycoprotein H from Homo sapiens (Human).